Here is a 222-residue protein sequence, read N- to C-terminus: MAIIMTESSYERRVKALYEKQIHMEALEAKFIKKVFKFNSNLLDVKEAASRHQRKVGKLQKVLMERREELDKRVSFIEELDRELEATKLHNLAMKDWFKQQKMLAKQRKNEIMESIHTLSKTTRTYINQEALPARVKGVTVLRGDKRDQLIPFDLKATDVEGLDSLCQHLESLNVDVAQWQQLISLAMDMAMESRAPTTPPKEADNCKSIIEIDLTSPMSHT.

Positions R51–A86 form a coiled coil.

This sequence belongs to the SPC25 family. In terms of assembly, component of the Ndc80 complex, which is composed of Ndc80, Nuf2 and Spc25.

Its subcellular location is the nucleus. It localises to the chromosome. It is found in the centromere. The protein resides in the kinetochore. Its function is as follows. Acts as a component of the essential kinetochore-associated Ndc80 complex, which is required for chromosome segregation and spindle checkpoint activity during meiosis and mitosis. Required for kinetochore integrity and the organization of stable microtubule binding sites in the outer plate of the kinetochore. Participates in SAC signaling that responds specifically to disruptions in spindle microtubule dynamics. The NDC80 complex synergistically enhances the affinity of the SKA1 complex for microtubules and may allow the NDC80 complex to track depolymerizing microtubules. The polypeptide is Kinetochore protein Spc25 (Drosophila melanogaster (Fruit fly)).